The following is a 128-amino-acid chain: 3-aminoacrylate deaminase RutC (128 aa).

Belongs to the RutC family.

The catalysed reaction is (Z)-3-aminoacrylate + H2O + H(+) = 3-oxopropanoate + NH4(+). Involved in pyrimidine catabolism. Catalyzes the deamination of 3-aminoacrylate to malonic semialdehyde, a reaction that can also occur spontaneously. RutC may facilitate the reaction and modulate the metabolic fitness, rather than catalyzing essential functions. This chain is 3-aminoacrylate deaminase RutC, found in Enterobacter sp. (strain 638).